We begin with the raw amino-acid sequence, 53 residues long: Kunitz-type trypsin inhibitor alpha chain (53 aa).

A disordered region spans residues 33–53 (GWGLPRRTGDESCPLNVKAVR).

Belongs to the protease inhibitor I3 (leguminous Kunitz-type inhibitor) family. Heterodimer of an alpha and a beta chain linked by a disulfide bond.

Inhibits trypsin with a Ki of 0.25 uM. Inhibits the trypsin-like proteases in midguts of larval H.armigera, S.exigua, and P.rapae. The sequence is that of Kunitz-type trypsin inhibitor alpha chain from Albizia kalkora (Kalkora mimosa).